Consider the following 252-residue polypeptide: Phosphoglycolate phosphatase (252 aa).

The Nucleophile role is filled by aspartate 13. Residues aspartate 13, aspartate 15, and aspartate 192 each contribute to the Mg(2+) site.

The protein belongs to the HAD-like hydrolase superfamily. CbbY/CbbZ/Gph/YieH family. As to quaternary structure, monomer. Requires Mg(2+) as cofactor. It depends on chloride as a cofactor.

It catalyses the reaction 2-phosphoglycolate + H2O = glycolate + phosphate. It functions in the pathway organic acid metabolism; glycolate biosynthesis; glycolate from 2-phosphoglycolate: step 1/1. Its function is as follows. Specifically catalyzes the dephosphorylation of 2-phosphoglycolate. Is involved in the dissimilation of the intracellular 2-phosphoglycolate formed during the DNA repair of 3'-phosphoglycolate ends, a major class of DNA lesions induced by oxidative stress. In Salmonella typhimurium (strain LT2 / SGSC1412 / ATCC 700720), this protein is Phosphoglycolate phosphatase.